The chain runs to 316 residues: Aspartate carbamoyltransferase catalytic subunit (316 aa).

Residues arginine 66 and threonine 67 each coordinate carbamoyl phosphate. Residue lysine 94 participates in L-aspartate binding. 3 residues coordinate carbamoyl phosphate: arginine 116, histidine 146, and glutamine 149. Positions 179 and 234 each coordinate L-aspartate. Carbamoyl phosphate is bound by residues glycine 275 and proline 276.

This sequence belongs to the aspartate/ornithine carbamoyltransferase superfamily. ATCase family. In terms of assembly, heterododecamer (2C3:3R2) of six catalytic PyrB chains organized as two trimers (C3), and six regulatory PyrI chains organized as three dimers (R2).

It catalyses the reaction carbamoyl phosphate + L-aspartate = N-carbamoyl-L-aspartate + phosphate + H(+). It participates in pyrimidine metabolism; UMP biosynthesis via de novo pathway; (S)-dihydroorotate from bicarbonate: step 2/3. Its function is as follows. Catalyzes the condensation of carbamoyl phosphate and aspartate to form carbamoyl aspartate and inorganic phosphate, the committed step in the de novo pyrimidine nucleotide biosynthesis pathway. The polypeptide is Aspartate carbamoyltransferase catalytic subunit (Nitrosomonas eutropha (strain DSM 101675 / C91 / Nm57)).